A 245-amino-acid polypeptide reads, in one-letter code: Orotidine 5'-phosphate decarboxylase (245 aa).

Residues D22, K44, 71-80, T131, R192, Q201, G221, and R222 contribute to the substrate site; that span reads DLKFHDIPNT. Residue K73 is the Proton donor of the active site.

It belongs to the OMP decarboxylase family. Type 1 subfamily. In terms of assembly, homodimer.

The enzyme catalyses orotidine 5'-phosphate + H(+) = UMP + CO2. Its pathway is pyrimidine metabolism; UMP biosynthesis via de novo pathway; UMP from orotate: step 2/2. Functionally, catalyzes the decarboxylation of orotidine 5'-monophosphate (OMP) to uridine 5'-monophosphate (UMP). The polypeptide is Orotidine 5'-phosphate decarboxylase (Yersinia pseudotuberculosis serotype O:1b (strain IP 31758)).